We begin with the raw amino-acid sequence, 421 residues long: Membrane-associated protein UidC (421 aa).

Positions 1 to 23 are cleaved as a signal peptide; it reads MRKIVAMAVICLTAASGLTSAYA.

It belongs to the outer membrane porin (Opr) (TC 1.B.25) family.

The protein resides in the cell outer membrane. Functionally, enhances the activity of the UidB (GusB) glucuronide transporter, on its own however it has no transport activity. Glucuronide transport does not occur in strain K12 due to a variant at position 100 of the UidB (GusB, AC P0CE44, AC P0CE45) protein. This is Membrane-associated protein UidC (uidC) from Escherichia coli (strain K12).